The sequence spans 930 residues: G patch domain-containing protein TGH (930 aa).

Residue Lys-25 forms a Glycyl lysine isopeptide (Lys-Gly) (interchain with G-Cter in ubiquitin) linkage. The segment at 76–152 (GWAPQSFTSS…PSAIPGPVPD (77 aa)) is disordered. Positions 159–199 (SESIGVKLLLKMGWRRGHSIKEVRASSDARREARKAFLAFY) constitute a G-patch domain. The SURP motif repeat unit spans residues 405-447 (LIEGFATFVSRCGKLYEDLSREKNQSNQLFDFLREGNGHDYYA). 3 disordered regions span residues 478 to 508 (AETRGSLLGEKPLQRSLKETDTSASSGGSFQ), 687 to 751 (RQVS…NEAA), and 773 to 930 (FEVP…RRRD). The segment covering 489-498 (PLQRSLKETD) has biased composition (basic and acidic residues). Positions 499–508 (TSASSGGSFQ) are enriched in polar residues. Residues 701 to 711 (IEEPEVEVEVE) are compositionally biased toward acidic residues. The segment covering 779 to 808 (EEIKSRSKPEDSSDKRLDRPGLKEKVEEKT) has biased composition (basic and acidic residues). Residues 848 to 857 (RRKRYNKKDR) show a composition bias toward basic residues. Over residues 858–877 (HRNDSESDSSSDYHSRDKQG) the composition is skewed to basic and acidic residues. The span at 892–908 (RSSHKKHSKHRRTKKSS) shows a compositional bias: basic residues. Basic and acidic residues predominate over residues 913-923 (SSDEEQKESRR).

As to expression, expressed in vasculature of cotyledons and leaves, young meristematic tissues, trichomes and pistils.

Its subcellular location is the nucleus speckle. The protein localises to the nucleus. It is found in the nucleoplasm. Functions as a component of microRNA (miRNA) and small interfering RNA (siRNA) biogenesis. May assist DCL1 and DCL4 to efficiently process and/or recruit the precursors of miRNAs and siRNAs. In the miRNA biogenesis pathway, associates with the DCL1 complex that processes primary miRNAs (pri-miRNAs) into miRNAs. Binds pri-miRNAs and precursor miRNAs (pre-miRNAs). Is required for the interaction between pri-miRNAs and DRB1. Required for general proper plant growth and, in particular, initiation of vascular development. Interacts genetically with AMP1, a glutamate carboxypeptidase involved in the regulation of meristem function. This chain is G patch domain-containing protein TGH, found in Arabidopsis thaliana (Mouse-ear cress).